The chain runs to 267 residues: Small ribosomal subunit protein uS2 (267 aa).

The tract at residues 1–72 is disordered; sequence MSGNEKEGLD…QLDEDVMPDE (72 aa). Positions 10-72 are enriched in acidic residues; the sequence is DASDSDFDPS…QLDEDVMPDE (63 aa).

It belongs to the universal ribosomal protein uS2 family. The N-terminus is blocked.

In Haloarcula marismortui (strain ATCC 43049 / DSM 3752 / JCM 8966 / VKM B-1809) (Halobacterium marismortui), this protein is Small ribosomal subunit protein uS2 (rps2).